Here is a 93-residue protein sequence, read N- to C-terminus: Small ribosomal subunit protein uS19 (93 aa).

The protein belongs to the universal ribosomal protein uS19 family.

Protein S19 forms a complex with S13 that binds strongly to the 16S ribosomal RNA. In Karelsulcia muelleri (strain GWSS) (Sulcia muelleri), this protein is Small ribosomal subunit protein uS19.